A 1023-amino-acid polypeptide reads, in one-letter code: Sodium/potassium-transporting ATPase subunit alpha-1 (1023 aa).

A propeptide spanning residues 1 to 5 (MGLGK) is cleaved from the precursor. The span at 1 to 11 (MGLGKGKDEYK) shows a compositional bias: basic and acidic residues. The interval 1–33 (MGLGKGKDEYKLAATSEDGGKKDKKAKAKKDMD) is disordered. Over 6 to 87 (GKDEYKLAAT…NALTPPPTTP (82 aa)) the chain is Cytoplasmic. A Phosphoserine; by PKC modification is found at S16. The tract at residues 82 to 84 (PPP) is interaction with phosphoinositide-3 kinase. A helical transmembrane segment spans residues 88-108 (EWVKFCKQLFGGFSMLLWIGA). Over 109-131 (ILCFLAYGIQAASEDEPANDNLY) the chain is Extracellular. A helical membrane pass occupies residues 132 to 152 (LGIVLSAVVIITGCFSYYQEA). Topologically, residues 153 to 288 (KSSKIMESFK…GGKTPIAIEI (136 aa)) are cytoplasmic. A disordered region spans residues 216–237 (SSLTGESEPQTRSPDFSNENPL). A helical membrane pass occupies residues 289-308 (EHFIHIITGVAVFLGVSFFI). Topologically, residues 309–320 (LSLILGYNWLEA) are extracellular. Residues 321–338 (VIFLIGIIVANVPEGLLA) form a helical membrane-spanning segment. Over 339–772 (TVTVCLTLTA…EEGRLIFDNL (434 aa)) the chain is Cytoplasmic. The active-site 4-aspartylphosphate intermediate is D376. Residue K487 participates in ATP binding. D717 and D721 together coordinate Mg(2+). Residues 773-792 (KKSIAYTLTSNIPEISPFLL) form a helical membrane-spanning segment. Residues 793 to 802 (FIIANIPLPL) are Extracellular-facing. Residues 803-823 (GTVTILCIDLGTDMVPAISLA) form a helical membrane-spanning segment. Residues 824–843 (YEKAESDIMKRQPRNPKTDK) lie on the Cytoplasmic side of the membrane. The chain crosses the membrane as a helical span at residues 844-866 (LVNERLISIAYGQIGMMQATAGF). The Extracellular segment spans residues 867-918 (FTYFVILAENGFLPMDLIGVRVLWDDKYVNDLEDSYGQQWTYERRKIVEYSC). The chain crosses the membrane as a helical span at residues 919-938 (HTAFFASIVIVQWADLIICK). Topologically, residues 939 to 951 (TRRNSIVQQGMTN) are cytoplasmic. Residue S943 is modified to Phosphoserine; by PKA. A helical transmembrane segment spans residues 952–970 (RILIFGLFEETALAAFLSY). Residues 971–985 (CPGMDVALRMYPMKP) are Extracellular-facing. The chain crosses the membrane as a helical span at residues 986-1006 (LWWFCAFPYSLLIFLYDEARR). The Cytoplasmic segment spans residues 1007 to 1023 (YILRRNPGGWVEKETYY).

This sequence belongs to the cation transport ATPase (P-type) (TC 3.A.3) family. Type IIC subfamily. As to quaternary structure, the sodium/potassium-transporting ATPase is composed of a catalytic alpha subunit, an auxiliary non-catalytic beta subunit and an additional regulatory subunit.

Its subcellular location is the cell membrane. The protein localises to the sarcolemma. The catalysed reaction is K(+)(out) + Na(+)(in) + ATP + H2O = K(+)(in) + Na(+)(out) + ADP + phosphate + H(+). Functionally, this is the catalytic component of the active enzyme, which catalyzes the hydrolysis of ATP coupled with the exchange of sodium and potassium ions across the plasma membrane. This action creates the electrochemical gradient of sodium and potassium ions, providing the energy for active transport of various nutrients. This is Sodium/potassium-transporting ATPase subunit alpha-1 (atp1a1) from Oreochromis mossambicus (Mozambique tilapia).